The following is a 439-amino-acid chain: Chitinase-like protein Idgf1 (439 aa).

Positions 1 to 20 are cleaved as a signal peptide; it reads MRFQLFYILGLLSVTSLTQA. A GH18 domain is found at 22-439; it reads NNLVCYYDST…IVRSIKYFMG (418 aa). Cysteines 26 and 53 form a disulfide. Asparagine 122, asparagine 218, and asparagine 346 each carry an N-linked (GlcNAc...) asparagine glycan. A disulfide bridge links cysteine 340 with cysteine 423.

It belongs to the glycosyl hydrolase 18 family. IDGF subfamily. In terms of processing, glycosylated.

It localises to the secreted. In terms of biological role, cooperates with insulin-like peptides to stimulate the proliferation, polarization and motility of imaginal disk cells. May act by stabilizing the binding of insulin-like peptides to its receptor through a simultaneous interaction with both molecules to form a multiprotein signaling complex. The polypeptide is Chitinase-like protein Idgf1 (Idgf1) (Drosophila simulans (Fruit fly)).